The following is a 581-amino-acid chain: ATP-dependent lipid A-core flippase (581 aa).

The next 5 membrane-spanning stretches (helical) occupy residues 27–47 (VFLA…FPAI), 63–83 (MVWL…VIVY), 154–174 (IALI…TLAI), 251–271 (MTPI…FLAL), and 279–299 (GASA…ISPV). In terms of domain architecture, ABC transmembrane type-1 spans 28-311 (FLAVIGMVGT…LATVNPTIQR (284 aa)). The region spanning 343 to 579 (ICFDNVSLRY…GSYYANLSRL (237 aa)) is the ABC transporter domain. 377–384 (GASGGGKS) lines the ATP pocket.

The protein belongs to the ABC transporter superfamily. Lipid exporter (TC 3.A.1.106) family. As to quaternary structure, homodimer.

It is found in the cell inner membrane. The enzyme catalyses ATP + H2O + lipid A-core oligosaccharideSide 1 = ADP + phosphate + lipid A-core oligosaccharideSide 2.. Its function is as follows. Involved in lipopolysaccharide (LPS) biosynthesis. Translocates lipid A-core from the inner to the outer leaflet of the inner membrane. Transmembrane domains (TMD) form a pore in the inner membrane and the ATP-binding domain (NBD) is responsible for energy generation. The polypeptide is ATP-dependent lipid A-core flippase (Albidiferax ferrireducens (strain ATCC BAA-621 / DSM 15236 / T118) (Rhodoferax ferrireducens)).